Consider the following 329-residue polypeptide: Acetyl-coenzyme A carboxylase carboxyl transferase subunit alpha (329 aa).

Positions 40-294 (QLETLAARRR…REALERNLSE (255 aa)) constitute a CoA carboxyltransferase C-terminal domain.

It belongs to the AccA family. In terms of assembly, acetyl-CoA carboxylase is a heterohexamer composed of biotin carboxyl carrier protein (AccB), biotin carboxylase (AccC) and two subunits each of ACCase subunit alpha (AccA) and ACCase subunit beta (AccD).

The protein localises to the cytoplasm. It catalyses the reaction N(6)-carboxybiotinyl-L-lysyl-[protein] + acetyl-CoA = N(6)-biotinyl-L-lysyl-[protein] + malonyl-CoA. It participates in lipid metabolism; malonyl-CoA biosynthesis; malonyl-CoA from acetyl-CoA: step 1/1. Its function is as follows. Component of the acetyl coenzyme A carboxylase (ACC) complex. First, biotin carboxylase catalyzes the carboxylation of biotin on its carrier protein (BCCP) and then the CO(2) group is transferred by the carboxyltransferase to acetyl-CoA to form malonyl-CoA. The chain is Acetyl-coenzyme A carboxylase carboxyl transferase subunit alpha from Synechococcus sp. (strain CC9311).